Reading from the N-terminus, the 156-residue chain is ATP synthase subunit b (156 aa).

Residues 7–27 (LVAQMVVFFILWWVVAKFIWP) traverse the membrane as a helical segment.

The protein belongs to the ATPase B chain family. F-type ATPases have 2 components, F(1) - the catalytic core - and F(0) - the membrane proton channel. F(1) has five subunits: alpha(3), beta(3), gamma(1), delta(1), epsilon(1). F(0) has three main subunits: a(1), b(2) and c(10-14). The alpha and beta chains form an alternating ring which encloses part of the gamma chain. F(1) is attached to F(0) by a central stalk formed by the gamma and epsilon chains, while a peripheral stalk is formed by the delta and b chains.

The protein localises to the cell inner membrane. Functionally, f(1)F(0) ATP synthase produces ATP from ADP in the presence of a proton or sodium gradient. F-type ATPases consist of two structural domains, F(1) containing the extramembraneous catalytic core and F(0) containing the membrane proton channel, linked together by a central stalk and a peripheral stalk. During catalysis, ATP synthesis in the catalytic domain of F(1) is coupled via a rotary mechanism of the central stalk subunits to proton translocation. Its function is as follows. Component of the F(0) channel, it forms part of the peripheral stalk, linking F(1) to F(0). This chain is ATP synthase subunit b, found in Ralstonia pickettii (strain 12J).